A 150-amino-acid polypeptide reads, in one-letter code: Large ribosomal subunit protein bL9 (150 aa).

The protein belongs to the bacterial ribosomal protein bL9 family.

In terms of biological role, binds to the 23S rRNA. The chain is Large ribosomal subunit protein bL9 from Pectobacterium carotovorum subsp. carotovorum (strain PC1).